A 497-amino-acid polypeptide reads, in one-letter code: Proline--tRNA ligase (497 aa).

This sequence belongs to the class-II aminoacyl-tRNA synthetase family. ProS type 3 subfamily. In terms of assembly, homodimer.

It is found in the cytoplasm. It carries out the reaction tRNA(Pro) + L-proline + ATP = L-prolyl-tRNA(Pro) + AMP + diphosphate. Functionally, catalyzes the attachment of proline to tRNA(Pro) in a two-step reaction: proline is first activated by ATP to form Pro-AMP and then transferred to the acceptor end of tRNA(Pro). This Deinococcus geothermalis (strain DSM 11300 / CIP 105573 / AG-3a) protein is Proline--tRNA ligase.